A 712-amino-acid chain; its full sequence is tRNA 5-methylaminomethyl-2-thiouridine biosynthesis bifunctional protein MnmC (712 aa).

A tRNA (mnm(5)s(2)U34)-methyltransferase region spans residues 1 to 268 (MPNMRHRVNS…RRALRHAQSD (268 aa)). An FAD-dependent cmnm(5)s(2)U34 oxidoreductase region spans residues 292–712 (IGGGVASTHL…MRKLIKGKAL (421 aa)).

It in the N-terminal section; belongs to the methyltransferase superfamily. tRNA (mnm(5)s(2)U34)-methyltransferase family. The protein in the C-terminal section; belongs to the DAO family. It depends on FAD as a cofactor.

The protein localises to the cytoplasm. It carries out the reaction 5-aminomethyl-2-thiouridine(34) in tRNA + S-adenosyl-L-methionine = 5-methylaminomethyl-2-thiouridine(34) in tRNA + S-adenosyl-L-homocysteine + H(+). In terms of biological role, catalyzes the last two steps in the biosynthesis of 5-methylaminomethyl-2-thiouridine (mnm(5)s(2)U) at the wobble position (U34) in tRNA. Catalyzes the FAD-dependent demodification of cmnm(5)s(2)U34 to nm(5)s(2)U34, followed by the transfer of a methyl group from S-adenosyl-L-methionine to nm(5)s(2)U34, to form mnm(5)s(2)U34. The protein is tRNA 5-methylaminomethyl-2-thiouridine biosynthesis bifunctional protein MnmC of Shewanella sediminis (strain HAW-EB3).